The primary structure comprises 350 residues: Biotin synthase (350 aa).

The 219-residue stretch at 63 to 281 folds into the Radical SAM core domain; sequence GDIELATLLS…IAVARITMPK (219 aa). [4Fe-4S] cluster is bound by residues C78, C82, and C85. [2Fe-2S] cluster-binding residues include C122, C153, C213, and R285.

This sequence belongs to the radical SAM superfamily. Biotin synthase family. As to quaternary structure, homodimer. It depends on [4Fe-4S] cluster as a cofactor. [2Fe-2S] cluster is required as a cofactor.

The enzyme catalyses (4R,5S)-dethiobiotin + (sulfur carrier)-SH + 2 reduced [2Fe-2S]-[ferredoxin] + 2 S-adenosyl-L-methionine = (sulfur carrier)-H + biotin + 2 5'-deoxyadenosine + 2 L-methionine + 2 oxidized [2Fe-2S]-[ferredoxin]. Its pathway is cofactor biosynthesis; biotin biosynthesis; biotin from 7,8-diaminononanoate: step 2/2. Catalyzes the conversion of dethiobiotin (DTB) to biotin by the insertion of a sulfur atom into dethiobiotin via a radical-based mechanism. The protein is Biotin synthase of Acidovorax ebreus (strain TPSY) (Diaphorobacter sp. (strain TPSY)).